The primary structure comprises 384 residues: Probable splicing factor YJU2B (384 aa).

Residues 1–28 (MGERKGTNKYYPPDFDPAKHGSLNGYRN) form a disordered region. Positions 183-212 (NSLLRSKFREEKKQIKEEEERDQALLTKAS) form a coiled coil. The segment at 275-331 (GIRTKTPSVPGISPVSLGVVRRTSKEENKAEDKSVESPDGSRSRKAEGMCRKEETGC) is disordered. Residues 297–331 (TSKEENKAEDKSVESPDGSRSRKAEGMCRKEETGC) are compositionally biased toward basic and acidic residues.

The protein belongs to the CWC16 family.

Its subcellular location is the nucleus. Its function is as follows. May be involved in mRNA splicing. The sequence is that of Probable splicing factor YJU2B (yju2b) from Xenopus laevis (African clawed frog).